The primary structure comprises 211 residues: uncharacterized protein (211 aa).

The first 27 residues, 1–27, serve as a signal peptide directing secretion; that stretch reads MKRTSAALVVFLILLFLGLLFLPMFIV.

This is an uncharacterized protein from Archaeoglobus fulgidus (strain ATCC 49558 / DSM 4304 / JCM 9628 / NBRC 100126 / VC-16).